We begin with the raw amino-acid sequence, 159 residues long: Transcription elongation factor GreA (159 aa).

This sequence belongs to the GreA/GreB family.

Functionally, necessary for efficient RNA polymerase transcription elongation past template-encoded arresting sites. The arresting sites in DNA have the property of trapping a certain fraction of elongating RNA polymerases that pass through, resulting in locked ternary complexes. Cleavage of the nascent transcript by cleavage factors such as GreA or GreB allows the resumption of elongation from the new 3'terminus. GreA releases sequences of 2 to 3 nucleotides. The polypeptide is Transcription elongation factor GreA (Buchnera aphidicola subsp. Cinara cedri (strain Cc)).